A 236-amino-acid chain; its full sequence is Protein-S-isoprenylcysteine O-methyltransferase (236 aa).

The next 4 helical transmembrane spans lie at 3 to 23 (NLHT…LGCV), 24 to 44 (FGLG…FFAF), 76 to 96 (AYWL…GKSF), and 108 to 128 (FLIN…LCLG). S-adenosyl-L-methionine-binding positions include 155–158 (HLLV), Tyr-163, and 168–171 (HPSY). Residues 174-194 (FFIWALGTQMLLGNFVSTLLF) traverse the membrane as a helical segment. Position 205 (Arg-205) interacts with substrate. Glu-209 contacts S-adenosyl-L-methionine.

This sequence belongs to the class VI-like SAM-binding methyltransferase superfamily. Isoprenylcysteine carboxyl methyltransferase family.

The protein resides in the membrane. The enzyme catalyses [protein]-C-terminal S-[(2E,6E)-farnesyl]-L-cysteine + S-adenosyl-L-methionine = [protein]-C-terminal S-[(2E,6E)-farnesyl]-L-cysteine methyl ester + S-adenosyl-L-homocysteine. Functionally, mediates C-terminal methylation of the isoprenylated C-terminal cysteine in M-factor. This Schizosaccharomyces pombe (strain 972 / ATCC 24843) (Fission yeast) protein is Protein-S-isoprenylcysteine O-methyltransferase (mam4).